The sequence spans 276 residues: Sec-independent protein translocase protein TatC (276 aa).

The disordered stretch occupies residues 1 to 29 (MVSLTSVPPYADATPDTRASSGPAPGRRK). 6 consecutive transmembrane segments (helical) span residues 49-69 (GGLVVGAVVGWLLYDPLLVLL), 103-123 (LFLAVMVTCPWWLYQVWAFVT), 136-156 (GFLGAAVPLFLGGAGLSWWVL), 187-207 (LVLAFGVAFVAPVLLVALNLA), 221-241 (WAVLLAFVFAAVMTPTPDALT), and 242-262 (MVLVAAPICALYFGALGVAVW).

The protein belongs to the TatC family. As to quaternary structure, the Tat system comprises two distinct complexes: a TatABC complex, containing multiple copies of TatA, TatB and TatC subunits, and a separate TatA complex, containing only TatA subunits. Substrates initially bind to the TatABC complex, which probably triggers association of the separate TatA complex to form the active translocon.

The protein localises to the cell membrane. Functionally, part of the twin-arginine translocation (Tat) system that transports large folded proteins containing a characteristic twin-arginine motif in their signal peptide across membranes. Together with TatB, TatC is part of a receptor directly interacting with Tat signal peptides. The chain is Sec-independent protein translocase protein TatC from Xylanimonas cellulosilytica (strain DSM 15894 / JCM 12276 / CECT 5975 / KCTC 9989 / LMG 20990 / NBRC 107835 / XIL07).